The chain runs to 347 residues: Putative adhesin P1-like protein MPN_099 (347 aa).

The span at 282-300 (FGTDHSTQPQPQSLKTTTP) shows a compositional bias: polar residues. The interval 282–302 (FGTDHSTQPQPQSLKTTTPVF) is disordered.

This sequence belongs to the adhesin P1 family.

This is Putative adhesin P1-like protein MPN_099 from Mycoplasma pneumoniae (strain ATCC 29342 / M129 / Subtype 1) (Mycoplasmoides pneumoniae).